The following is a 1744-amino-acid chain: Retrotransposon-like protein 1 (1744 aa).

Disordered stretches follow at residues 1-416, 823-859, and 1287-1439; these read MIEP…SPEE, READDETSDQPSSDGSDDLSESEPSELQQAGDSDQSG, and SSET…EVPS. A compositionally biased stretch (low complexity) spans 19 to 30; it reads SSKQMESSEGSS. Positions 31 to 40 are enriched in polar residues; it reads NTVEETPGSS. Positions 41–80 are enriched in low complexity; that stretch reads GAQAGAQAGAQAEAQAETQVEAQAEAQAEAQVEAQVEAQA. The segment covering 269-318 has biased composition (polar residues); that stretch reads DGSNQESSDGSNHELSNGSNHESSFGSNPESSDVSNLESSGGSNQESSDG. The span at 332–361 shows a compositional bias: low complexity; that stretch reads SDNSNQELSDNSNQESSDSSNQSSDISNQE. Composition is skewed to acidic residues over residues 385 to 407, 837 to 846, and 1291 to 1437; these read SDQDDTDLGDDEEEEEEEGGEEE, GSDDLSESEP, and EDKE…DEEV. Helical transmembrane passes span 1473 to 1493 and 1520 to 1540; these read FFRGLLYWKSLLGVAAVLVML and LILDSTLIASSGMATAIAQLL.

In terms of tissue distribution, expressed in placenta and in various tissues in late-fetal stage.

The protein resides in the membrane. Functionally, plays an essential role in capillaries endothelial cells for the maintenance of feto-maternal interface and for development of the placenta. The sequence is that of Retrotransposon-like protein 1 (Rtl1) from Mus musculus (Mouse).